The sequence spans 527 residues: V-set and immunoglobulin domain-containing protein 10 (527 aa).

Positions Met-1–Cys-13 are cleaved as a signal peptide. Ig-like C2-type domains follow at residues Leu-14–Ser-111, Pro-123–Leu-212, Pro-216–Gln-306, and Pro-310–Asn-399. Residues Tyr-23 to Asn-409 are Extracellular-facing. N-linked (GlcNAc...) asparagine glycosylation is found at Asn-32, Asn-41, Asn-52, Asn-64, Asn-74, Asn-90, Asn-129, Asn-139, Asn-191, Asn-206, Asn-226, Asn-260, Asn-276, Asn-325, Asn-346, and Asn-375. Cys-144 and Cys-194 are joined by a disulfide. An intrachain disulfide couples Cys-238 to Cys-288. A disulfide bridge connects residues Cys-330 and Cys-387. Residues Ile-410–Gly-430 traverse the membrane as a helical segment. Residues Thr-431–Ile-527 lie on the Cytoplasmic side of the membrane. The segment at Arg-501–Ile-527 is disordered. The span at Val-514–Ile-527 shows a compositional bias: acidic residues.

It localises to the membrane. This Xenopus laevis (African clawed frog) protein is V-set and immunoglobulin domain-containing protein 10 (vsig10).